Consider the following 287-residue polypeptide: Large ribosomal subunit protein uL2 (287 aa).

Residues 221 to 287 are disordered; it reads RGSVMNPCDH…SKRSRGGRDS (67 aa). Residues 258–287 are compositionally biased toward basic residues; the sequence is KTRKRNKPSNRFVLRKRRRTSKRSRGGRDS.

This sequence belongs to the universal ribosomal protein uL2 family. Part of the 50S ribosomal subunit. Forms a bridge to the 30S subunit in the 70S ribosome.

In terms of biological role, one of the primary rRNA binding proteins. Required for association of the 30S and 50S subunits to form the 70S ribosome, for tRNA binding and peptide bond formation. It has been suggested to have peptidyltransferase activity; this is somewhat controversial. Makes several contacts with the 16S rRNA in the 70S ribosome. This is Large ribosomal subunit protein uL2 from Prochlorococcus marinus (strain MIT 9303).